The following is a 233-amino-acid chain: Sugar fermentation stimulation protein homolog (233 aa).

Belongs to the SfsA family.

The sequence is that of Sugar fermentation stimulation protein homolog from Acetivibrio thermocellus (strain ATCC 27405 / DSM 1237 / JCM 9322 / NBRC 103400 / NCIMB 10682 / NRRL B-4536 / VPI 7372) (Clostridium thermocellum).